Reading from the N-terminus, the 289-residue chain is Phosphatidylserine decarboxylase proenzyme (289 aa).

Active-site charge relay system; for autoendoproteolytic cleavage activity residues include D89, H146, and S252. The active-site Schiff-base intermediate with substrate; via pyruvic acid; for decarboxylase activity is S252. S252 is modified (pyruvic acid (Ser); by autocatalysis).

The protein belongs to the phosphatidylserine decarboxylase family. PSD-B subfamily. Prokaryotic type I sub-subfamily. As to quaternary structure, heterodimer of a large membrane-associated beta subunit and a small pyruvoyl-containing alpha subunit. Requires pyruvate as cofactor. Post-translationally, is synthesized initially as an inactive proenzyme. Formation of the active enzyme involves a self-maturation process in which the active site pyruvoyl group is generated from an internal serine residue via an autocatalytic post-translational modification. Two non-identical subunits are generated from the proenzyme in this reaction, and the pyruvate is formed at the N-terminus of the alpha chain, which is derived from the carboxyl end of the proenzyme. The autoendoproteolytic cleavage occurs by a canonical serine protease mechanism, in which the side chain hydroxyl group of the serine supplies its oxygen atom to form the C-terminus of the beta chain, while the remainder of the serine residue undergoes an oxidative deamination to produce ammonia and the pyruvoyl prosthetic group on the alpha chain. During this reaction, the Ser that is part of the protease active site of the proenzyme becomes the pyruvoyl prosthetic group, which constitutes an essential element of the active site of the mature decarboxylase.

It is found in the cell membrane. It catalyses the reaction a 1,2-diacyl-sn-glycero-3-phospho-L-serine + H(+) = a 1,2-diacyl-sn-glycero-3-phosphoethanolamine + CO2. Its pathway is phospholipid metabolism; phosphatidylethanolamine biosynthesis; phosphatidylethanolamine from CDP-diacylglycerol: step 2/2. Functionally, catalyzes the formation of phosphatidylethanolamine (PtdEtn) from phosphatidylserine (PtdSer). The polypeptide is Phosphatidylserine decarboxylase proenzyme (Shewanella sp. (strain W3-18-1)).